The sequence spans 434 residues: Nicotinate phosphoribosyltransferase (434 aa).

At His242 the chain carries Phosphohistidine; by autocatalysis.

Belongs to the NAPRTase family. In terms of processing, transiently phosphorylated on a His residue during the reaction cycle. Phosphorylation strongly increases the affinity for substrates and increases the rate of nicotinate D-ribonucleotide production. Dephosphorylation regenerates the low-affinity form of the enzyme, leading to product release.

It carries out the reaction nicotinate + 5-phospho-alpha-D-ribose 1-diphosphate + ATP + H2O = nicotinate beta-D-ribonucleotide + ADP + phosphate + diphosphate. It participates in cofactor biosynthesis; NAD(+) biosynthesis; nicotinate D-ribonucleotide from nicotinate: step 1/1. Its function is as follows. Catalyzes the synthesis of beta-nicotinate D-ribonucleotide from nicotinate and 5-phospho-D-ribose 1-phosphate at the expense of ATP. The chain is Nicotinate phosphoribosyltransferase from Nitrobacter hamburgensis (strain DSM 10229 / NCIMB 13809 / X14).